A 254-amino-acid chain; its full sequence is Glycerol operon regulatory protein (254 aa).

In terms of domain architecture, HTH iclR-type spans 5–67; that stretch reads IQSLERAAAM…PASGRYQLGA (63 aa). A DNA-binding region (H-T-H motif) is located at residues 27–46; that stretch reads LSDIASTLGLAKGTAHGILR. Residues 82 to 251 form the IclR-ED domain; it reads LRARALVWTD…AAAVSRDLGA (170 aa).

May be an activator protein for the gylABX operon. This chain is Glycerol operon regulatory protein (gylR), found in Streptomyces griseus.